The chain runs to 517 residues: Glycosyltransferase family 92 protein F55C10.4 (517 aa).

The chain crosses the membrane as a helical span at residues 9 to 31 (FLKYFIIFTFFCVTFCFLKLCLG). Residues 156–454 (KPVIFCVSPQ…FKCYNESFYH (299 aa)) enclose the GT92 domain.

This sequence belongs to the glycosyltransferase 92 family.

It is found in the membrane. This Caenorhabditis elegans protein is Glycosyltransferase family 92 protein F55C10.4.